A 216-amino-acid chain; its full sequence is Dephospho-CoA kinase (216 aa).

The DPCK domain occupies 18-216; sequence IIGVIGPPCS…SELASVLQSK (199 aa). 26–31 is an ATP binding site; it reads CSGKST.

This sequence belongs to the CoaE family.

The protein resides in the cytoplasm. It catalyses the reaction 3'-dephospho-CoA + ATP = ADP + CoA + H(+). It participates in cofactor biosynthesis; coenzyme A biosynthesis; CoA from (R)-pantothenate: step 5/5. Functionally, catalyzes the phosphorylation of the 3'-hydroxyl group of dephosphocoenzyme A to form coenzyme A. This chain is Dephospho-CoA kinase, found in Rhodopirellula baltica (strain DSM 10527 / NCIMB 13988 / SH1).